We begin with the raw amino-acid sequence, 71 residues long: Conotoxin Bu25 (71 aa).

Positions 1 to 21 (MGMRMMVTVFPLVVLATTVVS) are cleaved as a signal peptide. Positions 22 to 44 (LRSNRASDGRRGIVNKLNDLVPK) are excised as a propeptide. Arginine amide is present on Arg70.

Belongs to the conotoxin A superfamily. Post-translationally, contains 3 disulfide bonds. They are not indicated here, since framework IV presents two different connectivities (I-V, II-III, IV-VI and I-III, II-V, IV-VI). In terms of tissue distribution, expressed by the venom duct.

It is found in the secreted. This Conus bullatus (Bubble cone) protein is Conotoxin Bu25.